The chain runs to 554 residues: Phosphomethylpyrimidine synthase (554 aa).

Residues N191, M220, Y249, H285, 305–307, 346–349, and E385 each bind substrate; these read SRG and DGLR. H389 lines the Zn(2+) pocket. Y412 contributes to the substrate binding site. H453 serves as a coordination point for Zn(2+). [4Fe-4S] cluster contacts are provided by C533, C536, and C541.

It belongs to the ThiC family. Homodimer. Requires [4Fe-4S] cluster as cofactor.

It carries out the reaction 5-amino-1-(5-phospho-beta-D-ribosyl)imidazole + S-adenosyl-L-methionine = 4-amino-2-methyl-5-(phosphooxymethyl)pyrimidine + CO + 5'-deoxyadenosine + formate + L-methionine + 3 H(+). It participates in cofactor biosynthesis; thiamine diphosphate biosynthesis. Its function is as follows. Catalyzes the synthesis of the hydroxymethylpyrimidine phosphate (HMP-P) moiety of thiamine from aminoimidazole ribotide (AIR) in a radical S-adenosyl-L-methionine (SAM)-dependent reaction. The chain is Phosphomethylpyrimidine synthase from Ehrlichia chaffeensis (strain ATCC CRL-10679 / Arkansas).